Consider the following 196-residue polypeptide: MASTDKPDRESIKSEEAPAAHPRRSNYSSVHVALRFLLFAASVTAVVVMVTAKQTKIVPVPGLPISVPLEAKFSDSPAFLYFISALSVAGLYGILTTLAAISIVLKPAYATRFLLHFALLDVLMLGIVASATGAAGGVAYVGLKGNSHVRWGKVCNVYDKFCQHVGSSIAVALFASVLLVLLTMLSVFSIYRKIPK.

Positions 1-18 (MASTDKPDRESIKSEEAP) are enriched in basic and acidic residues. Positions 1–22 (MASTDKPDRESIKSEEAPAAHP) are disordered. Residues 1–29 (MASTDKPDRESIKSEEAPAAHPRRSNYSS) are Cytoplasmic-facing. The chain crosses the membrane as a helical span at residues 30-50 (VHVALRFLLFAASVTAVVVMV). The Extracellular segment spans residues 51-84 (TAKQTKIVPVPGLPISVPLEAKFSDSPAFLYFIS). Residues 85-105 (ALSVAGLYGILTTLAAISIVL) traverse the membrane as a helical segment. Over 106-112 (KPAYATR) the chain is Cytoplasmic. Residues 113–133 (FLLHFALLDVLMLGIVASATG) traverse the membrane as a helical segment. Residues 134-167 (AAGGVAYVGLKGNSHVRWGKVCNVYDKFCQHVGS) lie on the Extracellular side of the membrane. A helical membrane pass occupies residues 168 to 188 (SIAVALFASVLLVLLTMLSVF). Residues 189–196 (SIYRKIPK) are Cytoplasmic-facing.

Belongs to the Casparian strip membrane proteins (CASP) family. Homodimer and heterodimers.

The protein resides in the cell membrane. The protein is CASP-like protein 1D1 of Populus trichocarpa (Western balsam poplar).